Consider the following 202-residue polypeptide: TPEQQRYVDLFIVVDHGMFMKYNGNSDKIRRRIHQMVNIMKEAYSTMYIDILLTGVEIWSNKDLINVQPAAPQTLDSFGEWRKTDLLNRKSHDNAQLLTSTDFNGPTIGLAYVGSMCDPKRSTGVIQDHSEQDLMVAITMAHELGHNLGISHDTGSCSCGGYSCIMSPVLSHEPSKYFSDCSYIQCWDFIMKENPQCILNKR.

Residues 6–202 (RYVDLFIVVD…ENPQCILNKR (197 aa)) form the Peptidase M12B domain. The Ca(2+) site is built by Asp-9 and Asp-93. Disulfide bonds link Cys-117-Cys-197, Cys-157-Cys-181, and Cys-159-Cys-164. His-142 is a Zn(2+) binding site. The active site involves Glu-143. Residues His-146 and His-152 each coordinate Zn(2+). Ca(2+) is bound by residues Cys-197 and Asn-200.

This sequence belongs to the venom metalloproteinase (M12B) family. P-I subfamily. Monomer. Zn(2+) is required as a cofactor. As to expression, expressed by the venom gland.

It is found in the secreted. With respect to regulation, inhibited by EDTA, DTT and high concentrations of zinc ions (&gt;2 mM). Weakly inhibited by TLCK. Not inhibited by PMSF. Activated by calcium ions. Snake venom zinc metalloproteinase that acts on fibrinogen, fibrin, fibronectin (FN1), type I collagen, type IV collagen, integrin alpha-7/beta-1 (ITGA7/ITGB1) and integrin alpha-1/beta-1 (ITGA1/ITGB1). Binds to fibronectin (FN1), fibrinogen and, weakly, to type I collagen and laminin. Cleaves Xaa-Leu bonds. Inhibits ADP- and collagen-induced platelet aggregation both in the presence (IC(50)=1.4 uM for collagen) and in the absence (IC(50)=2.2 uM for collagen) of cofactors. Has hemorrhagic activity. This chain is Snake venom metalloproteinase atroxlysin-1, found in Bothrops atrox (Barba amarilla).